Consider the following 111-residue polypeptide: Iron-sulfur cluster insertion protein ErpA (111 aa).

Positions 39, 103, and 105 each coordinate iron-sulfur cluster.

Belongs to the HesB/IscA family. In terms of assembly, homodimer. Iron-sulfur cluster is required as a cofactor.

Functionally, required for insertion of 4Fe-4S clusters for at least IspG. The chain is Iron-sulfur cluster insertion protein ErpA from Acinetobacter baumannii (strain AB307-0294).